The chain runs to 469 residues: Siroheme synthase (469 aa).

The segment at 1 to 203 (MDYLPIFTDL…GQEQDAKQEL (203 aa)) is precorrin-2 dehydrogenase /sirohydrochlorin ferrochelatase. NAD(+) contacts are provided by residues 22-23 (DV) and 43-44 (PV). Phosphoserine is present on serine 128. Residues 214–469 (GQVALIGSGP…LQQSAVVKLA (256 aa)) are uroporphyrinogen-III C-methyltransferase. Proline 223 is an S-adenosyl-L-methionine binding site. Aspartate 246 acts as the Proton acceptor in catalysis. The active-site Proton donor is lysine 268. Residues 299-301 (GGD), valine 304, 329-330 (TA), methionine 381, and glycine 410 each bind S-adenosyl-L-methionine.

It in the N-terminal section; belongs to the precorrin-2 dehydrogenase / sirohydrochlorin ferrochelatase family. In the C-terminal section; belongs to the precorrin methyltransferase family.

The enzyme catalyses uroporphyrinogen III + 2 S-adenosyl-L-methionine = precorrin-2 + 2 S-adenosyl-L-homocysteine + H(+). It catalyses the reaction precorrin-2 + NAD(+) = sirohydrochlorin + NADH + 2 H(+). The catalysed reaction is siroheme + 2 H(+) = sirohydrochlorin + Fe(2+). Its pathway is cofactor biosynthesis; adenosylcobalamin biosynthesis; precorrin-2 from uroporphyrinogen III: step 1/1. The protein operates within cofactor biosynthesis; adenosylcobalamin biosynthesis; sirohydrochlorin from precorrin-2: step 1/1. It functions in the pathway porphyrin-containing compound metabolism; siroheme biosynthesis; precorrin-2 from uroporphyrinogen III: step 1/1. It participates in porphyrin-containing compound metabolism; siroheme biosynthesis; siroheme from sirohydrochlorin: step 1/1. Its pathway is porphyrin-containing compound metabolism; siroheme biosynthesis; sirohydrochlorin from precorrin-2: step 1/1. Its function is as follows. Multifunctional enzyme that catalyzes the SAM-dependent methylations of uroporphyrinogen III at position C-2 and C-7 to form precorrin-2 via precorrin-1. Then it catalyzes the NAD-dependent ring dehydrogenation of precorrin-2 to yield sirohydrochlorin. Finally, it catalyzes the ferrochelation of sirohydrochlorin to yield siroheme. The sequence is that of Siroheme synthase from Photobacterium profundum (strain SS9).